The following is a 191-amino-acid chain: Rho-related GTP-binding protein RhoG (191 aa).

Gly-10–Thr-17 lines the GTP pocket. The Effector region signature appears at Tyr-32 to Tyr-40. GTP-binding positions include Asp-57–Gln-61 and Thr-115–Asp-118. Thr-138 and Thr-180 each carry phosphothreonine. Cys-188 carries the post-translational modification Cysteine methyl ester. Cys-188 carries the S-geranylgeranyl cysteine lipid modification. A propeptide spans Ile-189–Leu-191 (removed in mature form).

The protein belongs to the small GTPase superfamily. Rho family. As to quaternary structure, interacts with ARHGEF26. Interacts with ARHGEF16. Interacts with UNC13D; the interaction increases RhoG affinity to the membrane lipids, targets UNC13D to membrane lipids and facilitates cytotoxic granule (CG) docking to the plasma membrane.

Its subcellular location is the cell membrane. In terms of biological role, plays a role in immunological synaptic F-actin density and architecture organization. Regulates actin reorganization in lymphocytes, possibly through the modulation of Rac1 activity. Required for the formation of membrane ruffles during macropinocytosis. Plays a role in cell migration and is required for the formation of cup-like structures during trans-endothelial migration of leukocytes. Binds phospholipids in an activation-dependent manner; thereby acting as an anchor for other proteins to the plasma membrane (PM). Plays a role in exocytosis of cytotoxic granules (CG) by lymphocytes/Component of the exocytosis machinery in natural killer (NK) and CD8+ T cells. Promotes the docking of cytotoxic granules (CG) to the plasma membrane through the interaction with UNC13D. Involved in the cytotoxic activity of lymphocytes/primary CD8+ T cells. The sequence is that of Rho-related GTP-binding protein RhoG (RHOG) from Cricetus cricetus (Black-bellied hamster).